Consider the following 37-residue polypeptide: Hemocyanin subunit B (37 aa).

It belongs to the tyrosinase family. Hemocyanin subfamily. As to expression, hemolymph.

It localises to the secreted. The protein resides in the extracellular space. Its function is as follows. Hemocyanins are copper-containing oxygen carriers occurring freely dissolved in the hemolymph of many mollusks and arthropods. The sequence is that of Hemocyanin subunit B from Cancer pagurus (Rock crab).